A 229-amino-acid polypeptide reads, in one-letter code: Urease accessory protein UreF (229 aa).

It belongs to the UreF family. UreD, UreF and UreG form a complex that acts as a GTP-hydrolysis-dependent molecular chaperone, activating the urease apoprotein by helping to assemble the nickel containing metallocenter of UreC. The UreE protein probably delivers the nickel.

The protein resides in the cytoplasm. Its function is as follows. Required for maturation of urease via the functional incorporation of the urease nickel metallocenter. The sequence is that of Urease accessory protein UreF from Methylobacterium radiotolerans (strain ATCC 27329 / DSM 1819 / JCM 2831 / NBRC 15690 / NCIMB 10815 / 0-1).